Consider the following 414-residue polypeptide: Tyrosine--tRNA ligase (414 aa).

Tyr38 is an L-tyrosine binding site. The 'HIGH' region motif lies at 43 to 52 (CTARSLHIGS). L-tyrosine-binding residues include Tyr172 and Gln176. A 'KMSKS' region motif is present at residues 232 to 236 (KMGKT). Lys235 contributes to the ATP binding site. In terms of domain architecture, S4 RNA-binding spans 345–412 (ISVAKLLQLA…GKKRRIKVVV (68 aa)).

It belongs to the class-I aminoacyl-tRNA synthetase family. TyrS type 1 subfamily. Homodimer.

It localises to the cytoplasm. It catalyses the reaction tRNA(Tyr) + L-tyrosine + ATP = L-tyrosyl-tRNA(Tyr) + AMP + diphosphate + H(+). Functionally, catalyzes the attachment of tyrosine to tRNA(Tyr) in a two-step reaction: tyrosine is first activated by ATP to form Tyr-AMP and then transferred to the acceptor end of tRNA(Tyr). This chain is Tyrosine--tRNA ligase, found in Anaplasma marginale (strain St. Maries).